Here is a 354-residue protein sequence, read N- to C-terminus: Uroporphyrinogen decarboxylase (354 aa).

Residues 27–31, Asp77, Tyr154, Thr209, and His327 each bind substrate; that span reads RQAGR.

The protein belongs to the uroporphyrinogen decarboxylase family. In terms of assembly, homodimer.

Its subcellular location is the cytoplasm. It catalyses the reaction uroporphyrinogen III + 4 H(+) = coproporphyrinogen III + 4 CO2. The protein operates within porphyrin-containing compound metabolism; protoporphyrin-IX biosynthesis; coproporphyrinogen-III from 5-aminolevulinate: step 4/4. Catalyzes the decarboxylation of four acetate groups of uroporphyrinogen-III to yield coproporphyrinogen-III. This chain is Uroporphyrinogen decarboxylase, found in Pectobacterium atrosepticum (strain SCRI 1043 / ATCC BAA-672) (Erwinia carotovora subsp. atroseptica).